The following is a 657-amino-acid chain: Pyoverdine export ATP-binding/permease protein PvdT (657 aa).

Positions 6–245 (IDLRNIRKSY…LSANAGALQA (240 aa)) constitute an ABC transporter domain. 43 to 50 (GASGSGKS) contacts ATP. The next 4 membrane-spanning stretches (helical) occupy residues 285–305 (ALTL…LAVG), 532–552 (LSLM…IGVM), 590–610 (LSVV…GILI), and 620–640 (LAAV…FGFM).

This sequence belongs to the ABC transporter superfamily. Macrolide exporter (TC 3.A.1.122) family. As to quaternary structure, part of the tripartite efflux system PvdRT-OpmQ, which is composed of an inner membrane component with both ATPase and permease domains, PvdT, a periplasmic membrane fusion protein, PvdR, and an outer membrane component, OpmQ.

It is found in the cell inner membrane. In terms of biological role, part of the tripartite efflux system PvdRT-OpmQ required for the secretion into the extracellular milieu of the siderophore pyoverdine (PVD), which is involved in iron acquisition. This subunit binds PVD and drives its secretion by hydrolyzing ATP. The system is responsible for export of newly synthesized PVD after the final steps of biosynthesis have taken place in the periplasm. It is also responsible for recycling of PVD after internalization of ferri-PVD into the periplasm by the outer-membrane receptor FpvA and release of iron from PVD, thus making PVD available for new cycles of iron uptake. In Pseudomonas fluorescens (strain ATCC BAA-477 / NRRL B-23932 / Pf-5), this protein is Pyoverdine export ATP-binding/permease protein PvdT.